Reading from the N-terminus, the 208-residue chain is Inactive ribonuclease-like protein 10 (208 aa).

A signal peptide spans 1–24; it reads MKVTLVHLLFMMLLLLLGLGLGLG. N-linked (GlcNAc...) asparagine glycans are attached at residues Asn125 and Asn147.

This sequence belongs to the pancreatic ribonuclease family. The N-terminus is blocked. Glycosylated. Male-specific expression in proximal caput of the epididymis (at protein level).

Its subcellular location is the secreted. Its function is as follows. Secreted proximal epididymal protein required for post-testicular sperm maturation and male fertility. May be involved in sperm adhesion to the egg zona pellucida. Does not have ribonuclease activity. The sequence is that of Inactive ribonuclease-like protein 10 (Rnase10) from Mus musculus (Mouse).